Reading from the N-terminus, the 590-residue chain is Arginine--tRNA ligase (590 aa).

Positions 138 to 148 (ANPTGPLHIGH) match the 'HIGH' region motif.

This sequence belongs to the class-I aminoacyl-tRNA synthetase family. In terms of assembly, monomer.

It is found in the cytoplasm. It carries out the reaction tRNA(Arg) + L-arginine + ATP = L-arginyl-tRNA(Arg) + AMP + diphosphate. The sequence is that of Arginine--tRNA ligase from Orientia tsutsugamushi (strain Boryong) (Rickettsia tsutsugamushi).